We begin with the raw amino-acid sequence, 45 residues long: MRKRFFVGIFAINLLVGCQANYIRDVQGGTVAPSSSSKLTGISVQ.

Residues 1-17 form the signal peptide; the sequence is MRKRFFVGIFAINLLVG. The N-palmitoyl cysteine moiety is linked to residue Cys-18. Residue Cys-18 is the site of S-diacylglycerol cysteine attachment.

The protein localises to the cell outer membrane. In terms of biological role, lysis proteins are required for both colicin release and partial cell lysis. This is Lysis protein for colicin E1* (kil) from Shigella sonnei.